The following is a 376-amino-acid chain: Immunoglobulin G-binding protein H (376 aa).

A signal peptide spans 1 to 41; it reads MTRQQTKKNYSLRKLKTGTASVAVALTVLGAGFANQTTVKA. A disordered region spans residues 69 to 271; that stretch reads TSLENEKLKS…AAKKELEANH (203 aa). 4 stretches are compositionally biased toward basic and acidic residues: residues 72–146, 156–203, 211–245, and 253–271; these read ENEK…KRYQ, ETEK…DKQI, LSRD…DKQI, and LSRD…EANH. C repeat units follow at residues 153 to 187, 195 to 229, and 237 to 271; these read QQLE…EAEH and QKLK…EANH. 4 D repeats span residues 272 to 277, 278 to 283, 286 to 291, and 293 to 298; these read QKLEAE, AKALKE, AKQAEE, and AKLRAG. The interval 292-348 is disordered; the sequence is LAKLRAGKASDSQTPDTKPGNKAVPGKGQAPQAGTKPNQNKAPMKETKRQLPSTGET. An LPXTG sorting signal motif is present at residues 342 to 346; the sequence is LPSTG. A Pentaglycyl murein peptidoglycan amidated threonine modification is found at T345. A propeptide spans 346 to 376 (removed by sortase); the sequence is GETANPFFTAAALTVMATAGVAAVVKRKEEN.

Belongs to the M protein family.

The protein localises to the secreted. It is found in the cell wall. The polypeptide is Immunoglobulin G-binding protein H (Streptococcus pyogenes serotype M1).